The sequence spans 275 residues: MAVIKCKPTSPGRRHLVKVVNSDLHKGKPFAGLLAKKSKSGGRNNTGRITVRHIGGGHKQHYRLIDFKRNKDGIPAKVERLEYDPNRTANIALVLYADGERRYILAAKGMKAGDKIQSGIDAEIKSGNALPLRNIPVGSVVHAVEMKPAKGAQIARSAGAYVQVIARDGAYATLRLRSGEMRKVPVDCRATLGEVGNAEHMLRQLGKAGAKRWRGVRPTVRGVAMNPVDHPHGGGEGRTSGGRHPVSPWGQPTKGYKTRSNKRTDKYIVRRRNKK.

The segment at 223–275 is disordered; sequence VAMNPVDHPHGGGEGRTSGGRHPVSPWGQPTKGYKTRSNKRTDKYIVRRRNKK.

It belongs to the universal ribosomal protein uL2 family. As to quaternary structure, part of the 50S ribosomal subunit. Forms a bridge to the 30S subunit in the 70S ribosome.

Its function is as follows. One of the primary rRNA binding proteins. Required for association of the 30S and 50S subunits to form the 70S ribosome, for tRNA binding and peptide bond formation. It has been suggested to have peptidyltransferase activity; this is somewhat controversial. Makes several contacts with the 16S rRNA in the 70S ribosome. The chain is Large ribosomal subunit protein uL2 from Shewanella pealeana (strain ATCC 700345 / ANG-SQ1).